The chain runs to 243 residues: 2,3-bisphosphoglycerate-dependent phosphoglycerate mutase (243 aa).

Residues 8-15, 21-22, Arg-60, 87-90, Lys-98, 114-115, and 183-184 each bind substrate; these read RHGQSEWN, TG, ERHY, RR, and GN. Residue His-9 is the Tele-phosphohistidine intermediate of the active site. Residue Glu-87 is the Proton donor/acceptor of the active site.

It belongs to the phosphoglycerate mutase family. BPG-dependent PGAM subfamily. Homodimer.

It catalyses the reaction (2R)-2-phosphoglycerate = (2R)-3-phosphoglycerate. It functions in the pathway carbohydrate degradation; glycolysis; pyruvate from D-glyceraldehyde 3-phosphate: step 3/5. Catalyzes the interconversion of 2-phosphoglycerate and 3-phosphoglycerate. This chain is 2,3-bisphosphoglycerate-dependent phosphoglycerate mutase, found in Maricaulis maris (strain MCS10) (Caulobacter maris).